A 395-amino-acid polypeptide reads, in one-letter code: Phosphoserine aminotransferase (395 aa).

Threonine 20 carries the phosphothreonine modification. A pyridoxal 5'-phosphate-binding site is contributed by 80–81 (GT). Position 112 is a phosphoserine (serine 112). Pyridoxal 5'-phosphate contacts are provided by tryptophan 113, threonine 170, aspartate 194, and glutamine 217. Position 218 is an N6-(pyridoxal phosphate)lysine (lysine 218). 271 to 272 (NT) serves as a coordination point for pyridoxal 5'-phosphate.

This sequence belongs to the class-V pyridoxal-phosphate-dependent aminotransferase family. SerC subfamily. In terms of assembly, homodimer. Requires pyridoxal 5'-phosphate as cofactor.

The enzyme catalyses O-phospho-L-serine + 2-oxoglutarate = 3-phosphooxypyruvate + L-glutamate. It carries out the reaction 4-(phosphooxy)-L-threonine + 2-oxoglutarate = (R)-3-hydroxy-2-oxo-4-phosphooxybutanoate + L-glutamate. It functions in the pathway amino-acid biosynthesis; L-serine biosynthesis; L-serine from 3-phospho-D-glycerate: step 2/3. Its function is as follows. Phosphoserine aminotransferase (PSAT) is a pyridoxal 5'-phosphate-dependent enzyme involved in the second step of the phosphorylated pathway of serine biosynthesis. Catalyzes the reversible conversion of 3-phosphohydroxypyruvate to phosphoserine and of 3-hydroxy-2-oxo-4-phosphonooxybutanoate to phosphohydroxythreonine. Plays an indirect role in purine biosynthesis. The sequence is that of Phosphoserine aminotransferase from Saccharomyces cerevisiae (strain ATCC 204508 / S288c) (Baker's yeast).